A 357-amino-acid chain; its full sequence is Acyl-coenzyme A diphosphatase NUDT19 (357 aa).

The 233-residue stretch at 10–242 (AATVMLAAGW…IWLAPPQFYE (233 aa)) folds into the Nudix hydrolase domain. The interval 72–94 (PRFGLGPEPPRQPPFPGLSHGDA) is disordered. Over residues 78 to 87 (PEPPRQPPFP) the composition is skewed to pro residues. Residues 97–118 (AALPDDVALRICAIRETFEEAG) carry the Nudix box motif. 2 residues coordinate Mg(2+): Glu-112 and Glu-116. Lys-300 carries the N6-succinyllysine modification. The Microbody targeting signal motif lies at 355-357 (AHL).

The protein belongs to the Nudix hydrolase family. Monomer. Requires Mg(2+) as cofactor. Mn(2+) is required as a cofactor.

It is found in the peroxisome. It carries out the reaction an acyl-CoA + H2O = an acyl-4'-phosphopantetheine + adenosine 3',5'-bisphosphate + 2 H(+). The catalysed reaction is CoA + H2O = (R)-4'-phosphopantetheine + adenosine 3',5'-bisphosphate + 2 H(+). The enzyme catalyses hexanoyl-CoA + H2O = hexanoyl-4'-phosphopantetheine + adenosine 3',5'-bisphosphate + 2 H(+). It catalyses the reaction octanoyl-CoA + H2O = S-octanoyl-4'-phosphopantetheine + adenosine 3',5'-bisphosphate + 2 H(+). It carries out the reaction butanoyl-CoA + H2O = S-butanoyl-4'-phosphopantetheine + adenosine 3',5'-bisphosphate + 2 H(+). The catalysed reaction is propanoyl-CoA + H2O = propanoyl-4'-phosphopantetheine + adenosine 3',5'-bisphosphate + 2 H(+). The enzyme catalyses malonyl-CoA + H2O = malonyl-4'-phosphopantetheine + adenosine 3',5'-bisphosphate + 2 H(+). It catalyses the reaction succinyl-CoA + H2O = succinyl-4'-phosphopantetheine + adenosine 3',5'-bisphosphate + 2 H(+). It carries out the reaction choloyl-CoA + H2O = S-choloyl-4'-phosphopantetheine + adenosine 3',5'-bisphosphate + 2 H(+). The catalysed reaction is 4,8-dimethylnonanoyl-CoA + H2O = S-(4,8-dimethylnonanoyl)-4'-phosphopantetheine + adenosine 3',5'-bisphosphate + 2 H(+). The enzyme catalyses (9Z,12Z,15Z)-octadecatrienoyl-CoA + H2O = S-(9Z,12Z,15Z-octadecatrienoyl)-4'-phosphopantetheine + adenosine 3',5'-bisphosphate + 2 H(+). It catalyses the reaction (9Z,12Z)-octadecadienoyl-CoA + H2O = S-(9Z,12Z-octadecadienoyl)-4'-phosphopantetheine + adenosine 3',5'-bisphosphate + 2 H(+). It carries out the reaction (9Z)-hexadecenoyl-CoA + H2O = S-(9Z-hexadecenoyl)-4'-phosphopantetheine + adenosine 3',5'-bisphosphate + 2 H(+). The catalysed reaction is (9Z)-tetradecenoyl-CoA + H2O = S-(9Z-tetradecenoyl)-4'-phosphopantetheine + adenosine 3',5'-bisphosphate + 2 H(+). The enzyme catalyses (6Z)-octenoyl-CoA + H2O = S-(6Z-octenoyl)-4'-phosphopantetheine + adenosine 3',5'-bisphosphate + 2 H(+). It catalyses the reaction hexadecanoyl-CoA + H2O = S-hexadecanoyl-4'-phosphopantetheine + adenosine 3',5'-bisphosphate + 2 H(+). It carries out the reaction tetradecanoyl-CoA + H2O = tetradecanoyl-4'-phosphopantetheine + adenosine 3',5'-bisphosphate + 2 H(+). The catalysed reaction is dodecanoyl-CoA + H2O = S-dodecanoyl-4'-phosphopantetheine + adenosine 3',5'-bisphosphate + 2 H(+). The enzyme catalyses a 5'-end CoA-ribonucleoside in mRNA + H2O = a 5'-end phospho-adenosine-phospho-ribonucleoside in mRNA + (R)-4'-phosphopantetheine + 2 H(+). Functionally, fatty acyl-coenzyme A (CoA) diphosphatase that hydrolyzes fatty acyl-CoA to yield acyl-4'-phosphopantetheine and adenosine 3',5'-bisphosphate. Mediates the hydrolysis of a wide range of CoA esters, including choloyl-CoA and branched-chain fatty-acyl-CoA esters and at low substrate concentrations medium and long-chain fatty-acyl-CoA esters are the primary substrates. Highest activity seen with medium-chain acyl-CoA esters and higher rates of activity seen with the unsaturated acyl-CoA esters compared with the saturated esters. Exhibits decapping activity towards dpCoA-capped RNAs in vitro. The protein is Acyl-coenzyme A diphosphatase NUDT19 (Nudt19) of Mus caroli (Ryukyu mouse).